The primary structure comprises 265 residues: Elongation factor 1-delta (265 aa).

Positions 31–54 (MGSASNKPHNSPQSAASALSNSGD) are enriched in polar residues. 2 disordered regions span residues 31-64 (MGSA…RVAN) and 118-155 (KVQV…DAEA). A compositionally biased stretch (acidic residues) spans 130 to 153 (GTGEDDDDDDDIDLFGSDNEEEDA).

This sequence belongs to the EF-1-beta/EF-1-delta family. EF-1 is composed of 4 subunits: alpha, beta, delta, and gamma.

Functionally, EF-1-beta and EF-1-delta stimulate the exchange of GDP bound to EF-1-alpha to GTP. The protein is Elongation factor 1-delta (eef1d) of Xenopus laevis (African clawed frog).